A 127-amino-acid chain; its full sequence is Large ribosomal subunit protein uL22 (127 aa).

This sequence belongs to the universal ribosomal protein uL22 family. In terms of assembly, part of the 50S ribosomal subunit.

Functionally, this protein binds specifically to 23S rRNA; its binding is stimulated by other ribosomal proteins, e.g. L4, L17, and L20. It is important during the early stages of 50S assembly. It makes multiple contacts with different domains of the 23S rRNA in the assembled 50S subunit and ribosome. Its function is as follows. The globular domain of the protein is located near the polypeptide exit tunnel on the outside of the subunit, while an extended beta-hairpin is found that lines the wall of the exit tunnel in the center of the 70S ribosome. The protein is Large ribosomal subunit protein uL22 of Methylorubrum populi (strain ATCC BAA-705 / NCIMB 13946 / BJ001) (Methylobacterium populi).